A 998-amino-acid polypeptide reads, in one-letter code: Protein Smaug (998 aa).

A compositionally biased stretch (polar residues) spans 1 to 37 (MKYATGTDNAMTSGISGQTNNSNSASNEMQPTTSTPT). 3 disordered regions span residues 1 to 45 (MKYA…EATS), 50 to 69 (TATY…QSQP), and 329 to 370 (LCPA…GSSS). The span at 329–338 (LCPASGSRSS) shows a compositional bias: low complexity. 2 positions are modified to phosphoserine: Ser564 and Ser575. An interaction with cup region spans residues 583–763 (EFKPNYIKFH…KDLKFKLSKM (181 aa)). The SAM domain occupies 600–654 (GIGLWLKSLRLHKYIELFKNMTYEEMLLITEDFLQSVGVTKGASHKLALCIDKLK). Disordered regions lie at residues 773 to 892 (HVKP…MQQM) and 942 to 977 (NNGS…QQPK). Polar residues-rich tracts occupy residues 801–822 (KSGS…NFSL) and 854–864 (HQPQYKSSSYP). Phosphoserine is present on Ser971.

It belongs to the SMAUG family. As to quaternary structure, interacts with oskar (osk). Binds to the 3'-UTR of nos. Interacts with cup, which in turn recruits eIF4-E, leading to an indirect interaction between smg and eIF4-E that prevents mRNA translation.

The protein localises to the cytoplasm. Translation regulator that binds to the 3'-UTR of specific mRNAs such as nanos (nos) and prevent their translation. Prevents translation of unlocalized nos in the bulk cytoplasm via the recruitment of cup. The sequence is that of Protein Smaug from Drosophila simulans (Fruit fly).